The following is a 130-amino-acid chain: Glycine cleavage system H protein (130 aa).

The Lipoyl-binding domain maps to 22 to 103 (KAYIGISDCA…PYGSWIAAIE (82 aa)). N6-lipoyllysine is present on Lys63.

Belongs to the GcvH family. As to quaternary structure, the glycine cleavage system is composed of four proteins: P, T, L and H. It depends on (R)-lipoate as a cofactor.

Its function is as follows. The glycine cleavage system catalyzes the degradation of glycine. The H protein shuttles the methylamine group of glycine from the P protein to the T protein. The chain is Glycine cleavage system H protein from Clostridium botulinum (strain Okra / Type B1).